The following is a 444-amino-acid chain: Amino-acid acetyltransferase (444 aa).

Residues 295-434 (EKVRRANIND…QALYNYQRRS (140 aa)) form the N-acetyltransferase domain.

This sequence belongs to the acetyltransferase family. ArgA subfamily. In terms of assembly, homohexamer.

It is found in the cytoplasm. It catalyses the reaction L-glutamate + acetyl-CoA = N-acetyl-L-glutamate + CoA + H(+). The protein operates within amino-acid biosynthesis; L-arginine biosynthesis; N(2)-acetyl-L-ornithine from L-glutamate: step 1/4. This Proteus mirabilis (strain HI4320) protein is Amino-acid acetyltransferase.